A 1055-amino-acid polypeptide reads, in one-letter code: Focal adhesion kinase 1 (1055 aa).

The interval 1-29 (MAAAYLDPNLNHTPSSSTKTHLGTGTERS) is disordered. Position 2 is an N-acetylalanine (Ala-2). Position 5 is a phosphotyrosine (Tyr-5). Residues 10-27 (LNHTPSSSTKTHLGTGTE) are compositionally biased toward polar residues. At Thr-13 the chain carries Phosphothreonine. Ser-29 and Ser-54 each carry phosphoserine. One can recognise an FERM domain in the interval 35 to 355 (RVLKVFHYFE…GYCRLVNGAT (321 aa)). Lys-152 is covalently cross-linked (Glycyl lysine isopeptide (Lys-Gly) (interchain with G-Cter in SUMO)). Tyr-397 bears the Phosphotyrosine; by autocatalysis mark. Tyr-407 bears the Phosphotyrosine mark. A Protein kinase domain is found at 422–680 (IELGRCIGEG…ELKAQLSTIL (259 aa)). ATP-binding positions include 428 to 434 (IGEGQFG), Lys-454, and 500 to 502 (ELC). Asp-546 serves as the catalytic Proton acceptor. Residues Tyr-570 and Tyr-576 each carry the phosphotyrosine modification. Tyr-577 is subject to Phosphotyrosine; by RET and SRC. Residue Ser-580 is modified to Phosphoserine. Residues 685–697 (VQQEERMRMESRR) show a composition bias toward basic and acidic residues. Disordered regions lie at residues 685–734 (VQQE…PSPQ) and 837–923 (VRLS…LDRS). Residues 707–1055 (GSDEAPPKPS…LKMLGQTRPH (349 aa)) are interaction with TGFB1I1. Position 722 is a phosphoserine (Ser-722). Ser-732 bears the Phosphoserine; by CDK5 mark. A compositionally biased stretch (basic and acidic residues) spans 837–849 (VRLSRGSIDREDG). Ser-843 carries the phosphoserine modification. Phosphotyrosine is present on Tyr-861. The segment covering 869-880 (PAAPPKKPPRPG) has biased composition (pro residues). Over residues 886 to 896 (SNLSSISSPAE) the composition is skewed to polar residues. A Phosphoserine modification is found at Ser-913. Positions 915-1055 (PPTANLDRSN…LKMLGQTRPH (141 aa)) are interaction with ARHGEF28. Thr-917 is subject to Phosphothreonine. Tyr-928 carries the phosphotyrosine modification.

Belongs to the protein kinase superfamily. Tyr protein kinase family. FAK subfamily. Interacts with GIT1. Component of a complex that contains at least FER, CTTN and PTK2/FAK1. Interacts with BMX. Interacts with STEAP4. Interacts with ZFYVE21. Interacts with ESR1. Interacts with PIK3R1 or PIK3R2. Interacts with FGR, FLT4 and RET. Interacts with EPHA2 in resting cells; activation of EPHA2 recruits PTPN11, leading to dephosphorylation of PTK2/FAK1 and dissociation of the complex. Interacts with EPHA1 (kinase activity-dependent). Interacts with P53/TP53. Interacts (via first Pro-rich region) with CAS family members (via SH3 domain), including BCAR1, BCAR3, and CASS4. Interacts with NEDD9 (via SH3 domain). Interacts with TGFB1I1. Interacts with SRC, GRB2 and GRB7. Interacts with ARHGEF28. Interacts with SHB. Part of a complex composed of THSD1, PTK2/FAK1, TLN1 and VCL. Interacts with PXN and TLN1. Interacts with SORBS1. Interacts with STAT1. Interacts with WASL. Interacts with ARHGAP26 and SHC1. Interacts with RB1CC1; this inhibits PTK2/FAK1 activity and activation of downstream signaling pathways. Interacts with ARHGEF7. Interacts with MDM2. Interacts with PIAS1. Interacts with DCC. Interacts with LPXN (via LD motif 3). Interacts with MISP. Interacts with EMP2; regulates PTK2 activation and localization. Interacts with DSCAM. Interacts with AMBRA1. Interacts (when tyrosine-phosphorylated) with tensin TNS1; the interaction is increased by phosphorylation of TNS1. Post-translationally, phosphorylated on tyrosine residues upon activation, e.g. upon integrin signaling. Tyr-397 is the major autophosphorylation site, but other kinases can also phosphorylate this residue. Phosphorylation at Tyr-397 promotes interaction with SRC and SRC family members, leading to phosphorylation at Tyr-576, Tyr-577 and at additional tyrosine residues. FGR promotes phosphorylation at Tyr-397 and Tyr-576. FER promotes phosphorylation at Tyr-577, Tyr-861 and Tyr-928, even when cells are not adherent. Tyr-397, Tyr-576 and Ser-722 are phosphorylated only when cells are adherent. Phosphorylation at Tyr-397 is important for interaction with BMX, PIK3R1 and SHC1. Phosphorylation at Tyr-928 is important for interaction with GRB2. Dephosphorylated by PTPN11; PTPN11 is recruited to PTK2 via EPHA2 (tyrosine phosphorylated). Microtubule-induced dephosphorylation at Tyr-397 is crucial for the induction of focal adhesion disassembly; this dephosphorylation could be catalyzed by PTPN11 and regulated by ZFYVE21. Phosphorylation on tyrosine residues is enhanced by NTN1. In terms of processing, sumoylated; this enhances autophosphorylation.

Its subcellular location is the cell junction. The protein localises to the focal adhesion. The protein resides in the cell membrane. It localises to the cytoplasm. It is found in the perinuclear region. Its subcellular location is the cell cortex. The protein localises to the cytoskeleton. The protein resides in the microtubule organizing center. It localises to the centrosome. It is found in the nucleus. Its subcellular location is the cilium basal body. The enzyme catalyses L-tyrosyl-[protein] + ATP = O-phospho-L-tyrosyl-[protein] + ADP + H(+). Subject to autoinhibition, mediated by interactions between the FERM domain and the kinase domain. Activated by autophosphorylation at Tyr-397. This promotes interaction with SRC and phosphorylation at Tyr-576 and Tyr-577 in the kinase activation loop by SRC. Phosphorylation at Tyr-397, Tyr-576 and Tyr-577 is required for maximal kinase activity. Functionally, non-receptor protein-tyrosine kinase that plays an essential role in regulating cell migration, adhesion, spreading, reorganization of the actin cytoskeleton, formation and disassembly of focal adhesions and cell protrusions, cell cycle progression, cell proliferation and apoptosis. Required for early embryonic development and placenta development. Required for embryonic angiogenesis, normal cardiomyocyte migration and proliferation, and normal heart development. Regulates axon growth and neuronal cell migration, axon branching and synapse formation; required for normal development of the nervous system. Plays a role in osteogenesis and differentiation of osteoblasts. Functions in integrin signal transduction, but also in signaling downstream of numerous growth factor receptors, G-protein coupled receptors (GPCR), EPHA2, netrin receptors and LDL receptors. Forms multisubunit signaling complexes with SRC and SRC family members upon activation; this leads to the phosphorylation of additional tyrosine residues, creating binding sites for scaffold proteins, effectors and substrates. Regulates numerous signaling pathways. Promotes activation of phosphatidylinositol 3-kinase and the AKT1 signaling cascade. Promotes activation of MAPK1/ERK2, MAPK3/ERK1 and the MAP kinase signaling cascade. Promotes localized and transient activation of guanine nucleotide exchange factors (GEFs) and GTPase-activating proteins (GAPs), and thereby modulates the activity of Rho family GTPases. Signaling via CAS family members mediates activation of RAC1. Phosphorylates NEDD9 following integrin stimulation. Recruits the ubiquitin ligase MDM2 to P53/TP53 in the nucleus, and thereby regulates P53/TP53 activity, P53/TP53 ubiquitination and proteasomal degradation. Phosphorylates SRC; this increases SRC kinase activity. Phosphorylates ACTN1, ARHGEF7, GRB7, RET and WASL. Promotes phosphorylation of PXN and STAT1; most likely PXN and STAT1 are phosphorylated by a SRC family kinase that is recruited to autophosphorylated PTK2/FAK1, rather than by PTK2/FAK1 itself. Promotes phosphorylation of BCAR1; GIT2 and SHC1; this requires both SRC and PTK2/FAK1. Promotes phosphorylation of BMX and PIK3R1. Does not contain a kinase domain and inhibits PTK2/FAK1 phosphorylation and signaling. Its enhanced expression can attenuate the nuclear accumulation of LPXN and limit its ability to enhance serum response factor (SRF)-dependent gene transcription. This Rattus norvegicus (Rat) protein is Focal adhesion kinase 1.